Reading from the N-terminus, the 411-residue chain is Serine--tRNA ligase (411 aa).

226–228 (TSE) lines the L-serine pocket. 257–259 (RKE) is an ATP binding site. E280 is an L-serine binding site. 344 to 347 (EISS) provides a ligand contact to ATP. S379 is an L-serine binding site.

Belongs to the class-II aminoacyl-tRNA synthetase family. Type-1 seryl-tRNA synthetase subfamily. In terms of assembly, homodimer. The tRNA molecule binds across the dimer.

Its subcellular location is the cytoplasm. The catalysed reaction is tRNA(Ser) + L-serine + ATP = L-seryl-tRNA(Ser) + AMP + diphosphate + H(+). It catalyses the reaction tRNA(Sec) + L-serine + ATP = L-seryl-tRNA(Sec) + AMP + diphosphate + H(+). Its pathway is aminoacyl-tRNA biosynthesis; selenocysteinyl-tRNA(Sec) biosynthesis; L-seryl-tRNA(Sec) from L-serine and tRNA(Sec): step 1/1. Its function is as follows. Catalyzes the attachment of serine to tRNA(Ser). Is also able to aminoacylate tRNA(Sec) with serine, to form the misacylated tRNA L-seryl-tRNA(Sec), which will be further converted into selenocysteinyl-tRNA(Sec). The chain is Serine--tRNA ligase from Campylobacter jejuni subsp. jejuni serotype O:6 (strain 81116 / NCTC 11828).